We begin with the raw amino-acid sequence, 234 residues long: Purine nucleoside phosphorylase DeoD-type (234 aa).

Histidine 4 is a binding site for a purine D-ribonucleoside. Residues glycine 20, arginine 24, arginine 43, and 87–90 (RVGT) contribute to the phosphate site. Residues glutamate 162, 178–180 (EME), and 202–203 (SD) each bind a purine D-ribonucleoside. The Proton donor role is filled by aspartate 203.

Belongs to the PNP/UDP phosphorylase family. As to quaternary structure, homohexamer; trimer of homodimers.

It catalyses the reaction a purine D-ribonucleoside + phosphate = a purine nucleobase + alpha-D-ribose 1-phosphate. The catalysed reaction is a purine 2'-deoxy-D-ribonucleoside + phosphate = a purine nucleobase + 2-deoxy-alpha-D-ribose 1-phosphate. Its function is as follows. Catalyzes the reversible phosphorolytic breakdown of the N-glycosidic bond in the beta-(deoxy)ribonucleoside molecules, with the formation of the corresponding free purine bases and pentose-1-phosphate. In terms of biological role, cleavage of adenosine and its derivatives. The protein is Purine nucleoside phosphorylase DeoD-type of Geobacillus stearothermophilus (Bacillus stearothermophilus).